The sequence spans 187 residues: Ribosome-recycling factor (187 aa).

Belongs to the RRF family.

Its subcellular location is the cytoplasm. Its function is as follows. Responsible for the release of ribosomes from messenger RNA at the termination of protein biosynthesis. May increase the efficiency of translation by recycling ribosomes from one round of translation to another. This is Ribosome-recycling factor from Parabacteroides distasonis (strain ATCC 8503 / DSM 20701 / CIP 104284 / JCM 5825 / NCTC 11152).